Here is a 703-residue protein sequence, read N- to C-terminus: uncharacterized protein (703 aa).

A run of 4 helical transmembrane segments spans residues 23–43, 69–89, 143–163, and 250–270; these read IAMS…DFLI, ALSG…AAGG, PVIS…ALEA, and PPEW…PIGL. The PNPLA domain occupies 23-335; that stretch reads IAMSGAISAG…INNDPFEFVR (313 aa). The GXSXG signature appears at 72–76; it reads GASAG. Ser-74 (nucleophile) is an active-site residue. The active-site Proton acceptor is the Asp-322. The short motif at 322–324 is the DGA/G element; sequence DGG. A run of 3 helical transmembrane segments spans residues 357–377, 432–452, and 644–664; these read VIMI…EPPL, ETFS…LEAF, and ILST…APWT.

The protein resides in the cell membrane. This is an uncharacterized protein from Sinorhizobium fredii (strain NBRC 101917 / NGR234).